We begin with the raw amino-acid sequence, 235 residues long: Pyridoxine 5'-phosphate synthase (235 aa).

Asparagine 6 contacts 3-amino-2-oxopropyl phosphate. A 1-deoxy-D-xylulose 5-phosphate-binding site is contributed by 8–9 (DH). Residue arginine 17 coordinates 3-amino-2-oxopropyl phosphate. The Proton acceptor role is filled by histidine 42. The 1-deoxy-D-xylulose 5-phosphate site is built by arginine 44 and histidine 49. The Proton acceptor role is filled by glutamate 69. Threonine 99 contributes to the 1-deoxy-D-xylulose 5-phosphate binding site. Catalysis depends on histidine 189, which acts as the Proton donor. 3-amino-2-oxopropyl phosphate is bound by residues glycine 190 and 211–212 (GH).

The protein belongs to the PNP synthase family. In terms of assembly, homooctamer; tetramer of dimers.

Its subcellular location is the cytoplasm. It carries out the reaction 3-amino-2-oxopropyl phosphate + 1-deoxy-D-xylulose 5-phosphate = pyridoxine 5'-phosphate + phosphate + 2 H2O + H(+). The protein operates within cofactor biosynthesis; pyridoxine 5'-phosphate biosynthesis; pyridoxine 5'-phosphate from D-erythrose 4-phosphate: step 5/5. Catalyzes the complicated ring closure reaction between the two acyclic compounds 1-deoxy-D-xylulose-5-phosphate (DXP) and 3-amino-2-oxopropyl phosphate (1-amino-acetone-3-phosphate or AAP) to form pyridoxine 5'-phosphate (PNP) and inorganic phosphate. The chain is Pyridoxine 5'-phosphate synthase from Chlorobium chlorochromatii (strain CaD3).